A 141-amino-acid chain; its full sequence is ATP synthase F(0) complex subunit C2, mitochondrial (141 aa).

The N-terminal 66 residues, Met1 to Arg66, are a transit peptide targeting the mitochondrion. The chain crosses the membrane as a helical span at residues Val82 to Tyr102. Lys109 carries the N6,N6,N6-trimethyllysine modification. A helical membrane pass occupies residues Ile117–Ile137.

This sequence belongs to the ATPase C chain family. In terms of assembly, F-type ATPases have 2 components, CF(1) - the catalytic core - and CF(0) - the membrane proton channel. CF(1) has five subunits: alpha(3), beta(3), gamma(1), delta(1), epsilon(1). CF(0) has three main subunits: a, b and c. Interacts with DNAJC30; interaction is direct. In terms of processing, trimethylated by ATPSCKMT at Lys-109. Methylation is required for proper incorporation of the C subunit into the ATP synthase complex and mitochondrial respiration.

It localises to the mitochondrion membrane. Functionally, mitochondrial membrane ATP synthase (F(1)F(0) ATP synthase or Complex V) produces ATP from ADP in the presence of a proton gradient across the membrane which is generated by electron transport complexes of the respiratory chain. F-type ATPases consist of two structural domains, F(1) - containing the extramembraneous catalytic core and F(0) - containing the membrane proton channel, linked together by a central stalk and a peripheral stalk. During catalysis, ATP synthesis in the catalytic domain of F(1) is coupled via a rotary mechanism of the central stalk subunits to proton translocation. Part of the complex F(0) domain. A homomeric c-ring of probably 10 subunits is part of the complex rotary element. This is ATP synthase F(0) complex subunit C2, mitochondrial from Rattus norvegicus (Rat).